We begin with the raw amino-acid sequence, 436 residues long: 3-ketoacyl-CoA thiolase (436 aa).

Cys99 (acyl-thioester intermediate) is an active-site residue. Residues His392 and Cys422 each act as proton acceptor in the active site.

This sequence belongs to the thiolase-like superfamily. Thiolase family. Heterotetramer of two alpha chains (FadJ) and two beta chains (FadI).

The protein resides in the cytoplasm. It carries out the reaction an acyl-CoA + acetyl-CoA = a 3-oxoacyl-CoA + CoA. The protein operates within lipid metabolism; fatty acid beta-oxidation. In terms of biological role, catalyzes the final step of fatty acid oxidation in which acetyl-CoA is released and the CoA ester of a fatty acid two carbons shorter is formed. The chain is 3-ketoacyl-CoA thiolase from Shewanella oneidensis (strain ATCC 700550 / JCM 31522 / CIP 106686 / LMG 19005 / NCIMB 14063 / MR-1).